The following is a 78-amino-acid chain: Defensin-like protein 308 (78 aa).

The first 19 residues, 1-19, serve as a signal peptide directing secretion; it reads MKTSAFFIAVLLILSCSSS. 3 cysteine pairs are disulfide-bonded: Cys31–Cys50, Cys37–Cys55, and Cys41–Cys57.

This sequence belongs to the DEFL family.

The protein resides in the secreted. This Arabidopsis thaliana (Mouse-ear cress) protein is Defensin-like protein 308.